Consider the following 287-residue polypeptide: MPPLWALLALGCLRFGSAVNLQPQLASVTFATNNPTLTTVALEKPLCMFDSKEALTGTHEVYLYVLVDSAISRNASVQDSTNTPLGSTFLQTEGGRTGPYKAVAFDLIPCSDLPSLDAIGDVSKASQILNAYLVRVGANGTCLWDPNFQGLCNAPLSAATEYRFKYVLVNMSTGLVEDQTLWSDPIRTNQLTPYSTIDTWPGRRSGGMIVITSILGSLPFFLLVGFAGAIALSLVDMGSSDGETTHDSQITQEAVPKSLGASESSYTSVNRGPPLDRAEVYSSKLQD.

An N-terminal signal peptide occupies residues 1–18 (MPPLWALLALGCLRFGSA). The Lumenal portion of the chain corresponds to 19 to 207 (VNLQPQLASV…DTWPGRRSGG (189 aa)). Residues asparagine 74, asparagine 139, and asparagine 170 are each glycosylated (N-linked (GlcNAc...) asparagine). A helical membrane pass occupies residues 208-235 (MIVITSILGSLPFFLLVGFAGAIALSLV). Residues 236–287 (DMGSSDGETTHDSQITQEAVPKSLGASESSYTSVNRGPPLDRAEVYSSKLQD) lie on the Cytoplasmic side of the membrane. Positions 242–287 (GETTHDSQITQEAVPKSLGASESSYTSVNRGPPLDRAEVYSSKLQD) are disordered. The segment covering 261 to 270 (ASESSYTSVN) has biased composition (polar residues).

Belongs to the uroplakin-3 family. In terms of assembly, heterodimer with uroplakin-1B (UPK1B). As to expression, expressed in ureter.

It localises to the endoplasmic reticulum membrane. Functionally, component of the asymmetric unit membrane (AUM); a highly specialized biomembrane elaborated by terminally differentiated urothelial cells. May play an important role in AUM-cytoskeleton interaction in terminally differentiated urothelial cells. It also contributes to the formation of urothelial glycocalyx which may play an important role in preventing bacterial adherence. In Homo sapiens (Human), this protein is Uroplakin-3a (UPK3A).